Reading from the N-terminus, the 450-residue chain is SAGA complex/transcription factor TFIID complex subunit Taf12 (450 aa).

Polar residues-rich tracts occupy residues 1–10 (MNGQHSSPGT), 19–29 (PVNQAQFSQQR), and 190–212 (QNRQASSANGNNTGTSTPVNAST). Disordered stretches follow at residues 1-29 (MNGQHSSPGTPVQRPSAGPVNQAQFSQQR) and 190-281 (QNRQ…VEKS). The span at 217–236 (STASTPQLQQTQAQANAPQQ) shows a compositional bias: low complexity. Composition is skewed to polar residues over residues 237 to 246 (RINPETSSVP) and 255 to 281 (ANVSNESTELATSATQQSGLANNVEKS). The residue at position 297 (S297) is a Phosphoserine. One can recognise a Histone-fold domain in the interval 338–413 (NGNRLLSKRK…HLERNWNIRL (76 aa)). The tract at residues 426-450 (RKTGPTPSYQQKQNAIGTAKSLNKD) is disordered. The segment covering 430–441 (PTPSYQQKQNAI) has biased composition (polar residues).

This sequence belongs to the TAF12 family. Component of the 1.8 MDa SAGA (Spt-Ada-Gcn5 acetyltransferase) complex, which is composed of 19 subunits tra1, spt7, taf5, ngg1/ada3, sgf73, spt20, spt8, taf12, taf6, hfi1/ada1, ubp8, gcn5, ada2, spt3, sgf29, taf10, taf9, sgf11 and sus1. The SAGA complex is composed of 4 modules, namely the HAT (histone acetyltransferase) module (gcn5, ada2, ngg1/ada3 and sgf29), the DUB (deubiquitinating) module (ubp8, sgf11, sgf73 and sus1), the core or TAF (TBP-associated factor) module (taf5, taf6, taf9, taf10 and taf12), and the Tra1 or SPT (Suppressor of Ty) module (tra1, hfi1/ada1, spt3, spt7, spt8 and spt20). The Tra1/SPT module binds activators, the core module recruits TBP (TATA-binding protein), the HAT module contains the histone H3 acetyltransferase gcn5, and the DUB module comprises the histone H2B deubiquitinase ubp8. Component of the 1.2 MDa TFIID complex, which is composed of TATA-binding protein (TBP) and the 14 TBP-associated factors (TAFs). It comprises 1 copy of each taf1, taf2, taf3, taf7, taf8, taf11, taf13, 2 copies of each taf4, taf5, taf6, taf9, taf10, taf12, and 3 copies of taf14. In TFIID, taf12 heterodimerizes with taf4, forming ultimately an octamer consisting of a taf6-taf9 heterotetramer core flanked by taf4-taf12 dimers on either side, similar to the histone H2A-H2B-H3-H4 octamer.

The protein resides in the nucleus. Functionally, functions as a component of both the DNA-binding general transcription initiation factor complex TFIID and the transcription coactivator SAGA complex. Binding of TFIID to a promoter (with or without TATA element) is the initial step in pre-initiation complex (PIC) formation. TFIID plays a key role in the regulation of gene expression by RNA polymerase II through different activities such as transcription activator interaction, core promoter recognition and selectivity, TFIIA and TFIIB interaction, chromatin modification (histone acetylation by TAF1), facilitation of DNA opening and initiation of transcription. SAGA acts as a general cofactor required for essentially all RNA polymerase II transcription. At the promoters, SAGA is required for transcription pre-initiation complex (PIC) recruitment. It influences RNA polymerase II transcriptional activity through different activities such as TBP interaction (via core/TAF module) and promoter selectivity, interaction with transcription activators (via Tra1/SPT module), and chromatin modification through histone acetylation (via HAT module) and deubiquitination (via DUB module). SAGA preferentially acetylates histones H3 (to form H3K9ac, H3K14ac, H3K18ac and H3K23ac) and H2B and deubiquitinates histone H2B. SAGA interacts with DNA via upstream activating sequences (UASs). The chain is SAGA complex/transcription factor TFIID complex subunit Taf12 from Schizosaccharomyces pombe (strain 972 / ATCC 24843) (Fission yeast).